We begin with the raw amino-acid sequence, 195 residues long: HTH-type transcriptional regulator BetI (195 aa).

An HTH tetR-type domain is found at Ser-8–Leu-68. The H-T-H motif DNA-binding region spans Thr-31–Phe-50.

It functions in the pathway amine and polyamine biosynthesis; betaine biosynthesis via choline pathway [regulation]. Repressor involved in the biosynthesis of the osmoprotectant glycine betaine. It represses transcription of the choline transporter BetT and the genes of BetAB involved in the synthesis of glycine betaine. The polypeptide is HTH-type transcriptional regulator BetI (Shigella flexneri serotype 5b (strain 8401)).